The primary structure comprises 41 residues: Alpha-1B-glycoprotein (41 aa).

The N-linked (GlcNAc...) asparagine glycan is linked to N23.

As to quaternary structure, interacts with CRISP3. Glycosylated. As to expression, plasma.

The protein localises to the secreted. In Equus caballus (Horse), this protein is Alpha-1B-glycoprotein (A1BG).